The sequence spans 209 residues: Inorganic pyrophosphatase (209 aa).

Residues K38, R52, and Y64 each coordinate substrate. Residues D92, D97, and D130 each coordinate Mg(2+). Residue Y167 coordinates substrate.

Belongs to the PPase family. Homohexamer. Mg(2+) is required as a cofactor.

It localises to the cytoplasm. It catalyses the reaction diphosphate + H2O = 2 phosphate + H(+). Functionally, catalyzes the hydrolysis of inorganic pyrophosphate (PPi) forming two phosphate ions. In Chlamydia trachomatis serovar L2 (strain ATCC VR-902B / DSM 19102 / 434/Bu), this protein is Inorganic pyrophosphatase.